Consider the following 926-residue polypeptide: Protein transport protein SEC24-2 (926 aa).

A disordered region spans residues 1-54; it reads MSHHKKRVYPQAQAQYGQSATPLQQPAQLVPPQDPAAAGMSYAQMGMPPQGAAA. Over residues 20–54 the composition is skewed to low complexity; sequence ATPLQQPAQLVPPQDPAAAGMSYAQMGMPPQGAAA. The Zn(2+) site is built by Cys-231, Cys-234, Cys-253, and Cys-256. Positions 231–256 are zinc finger-like; sequence CRRCRSYMNPFITFIEQGRRWRCNFC.

This sequence belongs to the SEC23/SEC24 family. SEC24 subfamily. As to quaternary structure, the COPII coat is composed of at least 5 proteins: the SEC23/24 complex, the SEC13/31 complex, and the protein SAR1. Golgi apparatus membrane; Peripheral membrane protein; Cytoplasmic side.

The protein localises to the cytoplasm. Its subcellular location is the cytoplasmic vesicle. It is found in the COPII-coated vesicle membrane. It localises to the endoplasmic reticulum membrane. The protein resides in the golgi apparatus membrane. Functionally, component of the coat protein complex II (COPII) which promotes the formation of transport vesicles from the endoplasmic reticulum (ER). The coat has two main functions, the physical deformation of the endoplasmic reticulum membrane into vesicles and the selection of cargo molecules. The protein is Protein transport protein SEC24-2 (SEC242) of Saccharomyces uvarum (strain ATCC 76518 / CBS 7001 / CLIB 283 / NBRC 10550 / MCYC 623 / NCYC 2669 / NRRL Y-11845) (Yeast).